Reading from the N-terminus, the 491-residue chain is Myocilin (491 aa).

Positions 1 to 18 (MPAVQLLLLACPVWDVGA) are cleaved as a signal peptide. A glycan (N-linked (GlcNAc...) asparagine) is linked at Asn-43. A coiled-coil region spans residues 98–171 (QETPEGLQRE…QEVARLRRGQ (74 aa)). Positions 151-189 (ENLARRLESSSQEVARLRRGQCPQTRDTARDVPPGSREV) are disordered. An Olfactomedin-like domain is found at 231–490 (GCGELVWVGE…MVTYDIKLSK (260 aa)). A disulfide bond links Cys-232 and Cys-420. Positions 367, 415, 416, 464, and 465 each coordinate Ca(2+).

As to quaternary structure, homodimer (via N-terminus). Can also form higher oligomers. Interacts with OLFM3, FN1, NRCAM, GLDN and NFASC. Interacts (via N-terminus) with MYL2. Interacts with SFRP1, FRZB, FZD7, FZD10, FZD1 and WIF1; regulates Wnt signaling. Interacts with SNTA1; regulates muscle hypertrophy. Interacts with ERBB2 and ERBB3; activates ERBB2-ERBB3 signaling pathway. Interacts with SNCG; affects its secretion and its aggregation. Post-translationally, palmitoylated. In terms of processing, undergoes a calcium-dependent proteolytic cleavage at Arg-213 by CAPN2 in the endoplasmic reticulum. The result is the production of two fragments, one of 35 kDa containing the C-terminal olfactomedin-like domain, and another of 20 kDa containing the N-terminal leucine zipper-like domain. Glycosylated.

It is found in the secreted. The protein localises to the golgi apparatus. Its subcellular location is the cytoplasmic vesicle. The protein resides in the extracellular space. It localises to the extracellular matrix. It is found in the extracellular exosome. The protein localises to the mitochondrion. Its subcellular location is the mitochondrion intermembrane space. The protein resides in the mitochondrion inner membrane. It localises to the mitochondrion outer membrane. It is found in the rough endoplasmic reticulum. The protein localises to the cell projection. Its subcellular location is the cilium. The protein resides in the endoplasmic reticulum. Functionally, secreted glycoprotein regulating the activation of different signaling pathways in adjacent cells to control different processes including cell adhesion, cell-matrix adhesion, cytoskeleton organization and cell migration. Promotes substrate adhesion, spreading and formation of focal contacts. Negatively regulates cell-matrix adhesion and stress fiber assembly through Rho protein signal transduction. Modulates the organization of actin cytoskeleton by stimulating the formation of stress fibers through interactions with components of Wnt signaling pathways. Promotes cell migration through activation of PTK2 and the downstream phosphatidylinositol 3-kinase signaling. Plays a role in bone formation and promotes osteoblast differentiation in a dose-dependent manner through mitogen-activated protein kinase signaling. Mediates myelination in the peripheral nervous system through ERBB2/ERBB3 signaling. Plays a role as a regulator of muscle hypertrophy through the components of dystrophin-associated protein complex. Involved in positive regulation of mitochondrial depolarization. Plays a role in neurite outgrowth. May participate in the obstruction of fluid outflow in the trabecular meshwork. The chain is Myocilin (MYOC) from Macaca fascicularis (Crab-eating macaque).